The primary structure comprises 365 residues: UDP-galactose transporter homolog 1 (365 aa).

The next 2 membrane-spanning stretches (helical) occupy residues 42–62 and 80–100; these read IIDLIICVSGIYASFLTWAVL and ASLVINTVQSFLAAAVGYAYL. Asparagine 115 carries an N-linked (GlcNAc...) asparagine glycan. A run of 2 helical transmembrane segments spans residues 182–202 and 206–226; these read YAVVVLVTIGVSMFTIFHAAP and SGAGSEHQLYGLGLLGISMLL. Asparagine 231 is a glycosylation site (N-linked (GlcNAc...) asparagine). Transmembrane regions (helical) follow at residues 249 to 269, 289 to 309, 315 to 335, and 339 to 359; these read VMCGLNLLTGVFTTVSLLTFS, DIVLFGLCGAVGQVFIFQTLE, VLVTVNVTRKMFSMLLSVVWF, and LTLGQWAGVAAVFGGIGFEAW.

This sequence belongs to the nucleotide-sugar transporter family. SLC35B subfamily.

It localises to the endoplasmic reticulum membrane. Functionally, may be involved in specific transport of UDP-Gal from the cytosol to the Golgi lumen. Involved in the maintenance of optimal conditions for the folding of secretory pathway proteins in the endoplasmic reticulum. The chain is UDP-galactose transporter homolog 1 (HUT1) from Yarrowia lipolytica (strain CLIB 122 / E 150) (Yeast).